Reading from the N-terminus, the 106-residue chain is Large ribosomal subunit protein bL21 (106 aa).

It belongs to the bacterial ribosomal protein bL21 family. Part of the 50S ribosomal subunit. Contacts protein L20.

This protein binds to 23S rRNA in the presence of protein L20. The polypeptide is Large ribosomal subunit protein bL21 (Dichelobacter nodosus (strain VCS1703A)).